Here is a 337-residue protein sequence, read N- to C-terminus: Fructose-1,6-bisphosphatase class 1 (337 aa).

Mg(2+)-binding residues include Glu94, Asp116, Leu118, and Asp119. Substrate-binding positions include 119–122 (DGSS), Asn210, and Lys276. Residue Glu282 participates in Mg(2+) binding.

This sequence belongs to the FBPase class 1 family. As to quaternary structure, homotetramer. The cofactor is Mg(2+).

It localises to the cytoplasm. It catalyses the reaction beta-D-fructose 1,6-bisphosphate + H2O = beta-D-fructose 6-phosphate + phosphate. The protein operates within carbohydrate biosynthesis; gluconeogenesis. This chain is Fructose-1,6-bisphosphatase class 1, found in Burkholderia multivorans (strain ATCC 17616 / 249).